Reading from the N-terminus, the 300-residue chain is MKLAVYGKGGIGKSTTSCNISIALARRGKKVLQIGCDPKHDSTFTLTGFLIPTIIDTLQAKDYHYEDVWPEDVIYQGYGEVDSVEAGGPPAGAGCGGYVVGETVKLLKELNAFYEYDVILFDVLGDVVCGGFAAPLNYADYCLIVTDNGFDALFAANRIVASVREKSKTHPLRLAGLIGNRTSKRDLIDKYVEVCPMPVIEVLPLIEDIRVSRVKGKTVFEMAETDQKLNYICDFYLNIADQLLASPEGVIPLELEDRELFTLLSTFYLTVTPQNQGETQSTISTPLTSNSASELDFILV.

Residues 10 to 15 (GIGKST) and lysine 39 each bind ATP. Residue serine 14 coordinates Mg(2+). 2 residues coordinate [4Fe-4S] cluster: cysteine 95 and cysteine 129. 180–181 (NR) lines the ATP pocket.

This sequence belongs to the NifH/BchL/ChlL family. Homodimer. Protochlorophyllide reductase is composed of three subunits; ChlL, ChlN and ChlB. The cofactor is [4Fe-4S] cluster.

It localises to the plastid. The protein localises to the chloroplast. The enzyme catalyses chlorophyllide a + oxidized 2[4Fe-4S]-[ferredoxin] + 2 ADP + 2 phosphate = protochlorophyllide a + reduced 2[4Fe-4S]-[ferredoxin] + 2 ATP + 2 H2O. Its pathway is porphyrin-containing compound metabolism; chlorophyll biosynthesis (light-independent). In terms of biological role, component of the dark-operative protochlorophyllide reductase (DPOR) that uses Mg-ATP and reduced ferredoxin to reduce ring D of protochlorophyllide (Pchlide) to form chlorophyllide a (Chlide). This reaction is light-independent. The L component serves as a unique electron donor to the NB-component of the complex, and binds Mg-ATP. The chain is Light-independent protochlorophyllide reductase iron-sulfur ATP-binding protein from Auxenochlorella protothecoides (Green microalga).